Reading from the N-terminus, the 216-residue chain is Small ribosomal subunit protein uS3 (216 aa).

The KH type-2 domain occupies 38 to 106; it reads IRGYLKKKLY…EIIINILEVR (69 aa).

Belongs to the universal ribosomal protein uS3 family. As to quaternary structure, part of the 30S ribosomal subunit. Forms a tight complex with proteins S10 and S14.

Functionally, binds the lower part of the 30S subunit head. Binds mRNA in the 70S ribosome, positioning it for translation. In Syntrophus aciditrophicus (strain SB), this protein is Small ribosomal subunit protein uS3.